The following is a 142-amino-acid chain: Inner membrane protein YqaA (142 aa).

Topologically, residues 1 to 2 (MS) are cytoplasmic. A helical membrane pass occupies residues 3–23 (EALSLFSLFASSFLSATLLPG). The Periplasmic portion of the chain corresponds to 24–26 (NSE). Residues 27-47 (VVLVAMLLSGISHPWVLVLTA) traverse the membrane as a helical segment. The Cytoplasmic segment spans residues 48 to 86 (TMGNSLGGLTNVILGRFFPLRKTSRWQEKATGWLKRYGA). A helical membrane pass occupies residues 87-107 (VTLLLSWMPVVGDLLCLLAGW). Topologically, residues 108–142 (MRISWGPVIFFLCLGKALRYVAVAAATVQGMMWWH) are periplasmic.

To H.influenzae HI_0489.

The protein resides in the cell inner membrane. This Escherichia coli (strain K12) protein is Inner membrane protein YqaA (yqaA).